The sequence spans 284 residues: Two-pore potassium channel 4 (284 aa).

Residues 1–21 (MEEENLLNENLLHPNESSPEE) form a disordered region. Residues 1–31 (MEEENLLNENLLHPNESSPEETQVTTVSKSK) are Cytoplasmic-facing. A helical transmembrane segment spans residues 32 to 52 (WTILVLAMILLLVYLTFGVCT). Residues 70–89 (DAFYFSIVTFSTVGYGDIVP) constitute an intramembrane region (pore-forming). The helical transmembrane segment at 93–113 (TTKILTIVLVSTGVVFLDYLL) threads the bilayer. Residues 114-156 (NRVVSHVLSLQENAILDRINKTRNRAIRDHIAEDGKIRLKWKL) are Cytoplasmic-facing. A helical transmembrane segment spans residues 157–177 (CLAFCAVGLCVGSGALFLHVF). Positions 184 to 203 (DSVYLSVISVTTVGYGDKTF) form an intramembrane region, pore-forming. The chain crosses the membrane as a helical span at residues 211-231 (FAVFWLLLSTIAMATLFLYLA). The Cytoplasmic portion of the chain corresponds to 232–284 (EMRIDRTTVMKLPPSESEFIVFKLRESGRISEDDIKQIVREFENLEEVPSSGS).

This sequence belongs to the two pore domain potassium channel (TC 1.A.1.7) family. In terms of assembly, homodimer. In terms of tissue distribution, predominantly expressed in pollen.

It is found in the cell membrane. Its function is as follows. Voltage-independent, instantaneously activating, potassium-selective plasma membrane ion channel. Open rectifier. Regulated by cytoplasmic pH and extra-cellular calcium. Has some permeability for Rb(+) and NH(4)(+), but none for Na(+) or Li(+). The chain is Two-pore potassium channel 4 (TPK4) from Arabidopsis thaliana (Mouse-ear cress).